Reading from the N-terminus, the 443-residue chain is ATP-dependent protease ATPase subunit HslU (443 aa).

Residues Ile-20, 62–67 (GVGKTE), Asp-255, Glu-321, and Arg-393 each bind ATP.

This sequence belongs to the ClpX chaperone family. HslU subfamily. As to quaternary structure, a double ring-shaped homohexamer of HslV is capped on each side by a ring-shaped HslU homohexamer. The assembly of the HslU/HslV complex is dependent on binding of ATP.

It is found in the cytoplasm. ATPase subunit of a proteasome-like degradation complex; this subunit has chaperone activity. The binding of ATP and its subsequent hydrolysis by HslU are essential for unfolding of protein substrates subsequently hydrolyzed by HslV. HslU recognizes the N-terminal part of its protein substrates and unfolds these before they are guided to HslV for hydrolysis. This chain is ATP-dependent protease ATPase subunit HslU, found in Helicobacter pylori (strain J99 / ATCC 700824) (Campylobacter pylori J99).